The sequence spans 415 residues: MFDRAQSTIANVDPEIFAAIEQENRRQEDHIELIASENYTSPAVMAAQGSQLTNKYAEGYPGKRYYGGCEYVDVVEQLAIDRVKQLFGAEAANVQPNSGSQANQGVFFAMLKPGDTIMGMSLAHGGHLTHGSPVNMSGKWFNVVSYGLNENEDIDYEAAEQLAQEHKPKLIVAGASAFSLKIDFERLAKIAKSVGAYLMVDMAHYAGLIAAGVYPNPVPHADFVTTTTHKSLRGPRGGVILMKAEYEKPINSAIFPGIQGGPLMHVIAGKAVAFKEALSPEFKAYQEKVVENARVLAETLVKRGLRIVSGRTESHVMLVDLRAKHITGKAAEAALGAAHITVNKNAIPNDPEKPFVTSGVRLGSPAMTTRGFGPAEAEQVGNLIADVLDNPEDAATIERVRAQVAELTKRFPVYR.

(6S)-5,6,7,8-tetrahydrofolate is bound by residues leucine 122 and 126–128 (GHL). An N6-(pyridoxal phosphate)lysine modification is found at lysine 230.

The protein belongs to the SHMT family. As to quaternary structure, homodimer. It depends on pyridoxal 5'-phosphate as a cofactor.

The protein localises to the cytoplasm. It catalyses the reaction (6R)-5,10-methylene-5,6,7,8-tetrahydrofolate + glycine + H2O = (6S)-5,6,7,8-tetrahydrofolate + L-serine. It participates in one-carbon metabolism; tetrahydrofolate interconversion. It functions in the pathway amino-acid biosynthesis; glycine biosynthesis; glycine from L-serine: step 1/1. Functionally, catalyzes the reversible interconversion of serine and glycine with tetrahydrofolate (THF) serving as the one-carbon carrier. This reaction serves as the major source of one-carbon groups required for the biosynthesis of purines, thymidylate, methionine, and other important biomolecules. Also exhibits THF-independent aldolase activity toward beta-hydroxyamino acids, producing glycine and aldehydes, via a retro-aldol mechanism. This Burkholderia lata (strain ATCC 17760 / DSM 23089 / LMG 22485 / NCIMB 9086 / R18194 / 383) protein is Serine hydroxymethyltransferase 3.